The primary structure comprises 238 residues: Small ribosomal subunit protein uS2 (238 aa).

It belongs to the universal ribosomal protein uS2 family.

The polypeptide is Small ribosomal subunit protein uS2 (Synechococcus sp. (strain CC9311)).